The sequence spans 177 residues: Secretion monitor (177 aa).

The N-terminal stretch at 1–37 (MIGILNRWRQFGRRYFWPHLLLGMVAASLGVPLNLSG) is a signal peptide.

Belongs to the SecM family.

The protein resides in the cytoplasm. The protein localises to the cytosol. Its subcellular location is the periplasm. In terms of biological role, regulates secA expression by translational coupling of the secM secA operon. Translational pausing at a specific Pro residue 5 residues before the end of the protein may allow disruption of a mRNA repressor helix that normally suppresses secA translation initiation. This chain is Secretion monitor, found in Yersinia pestis bv. Antiqua (strain Antiqua).